Here is a 960-residue protein sequence, read N- to C-terminus: Leucine--tRNA ligase (960 aa).

The 'HIGH' region signature appears at 71 to 82; the sequence is PYPSGAGLHVGH. The 'KMSKS' region motif lies at 729–733; sequence KMGKS. An ATP-binding site is contributed by Lys-732.

Belongs to the class-I aminoacyl-tRNA synthetase family.

It localises to the cytoplasm. It carries out the reaction tRNA(Leu) + L-leucine + ATP = L-leucyl-tRNA(Leu) + AMP + diphosphate. This is Leucine--tRNA ligase from Corynebacterium diphtheriae (strain ATCC 700971 / NCTC 13129 / Biotype gravis).